Reading from the N-terminus, the 501-residue chain is Bifunctional purine biosynthesis protein PurH (501 aa).

One can recognise an MGS-like domain in the interval 1 to 144; that stretch reads MKKRALISVF…KNFKDVVVLS (144 aa).

This sequence belongs to the PurH family.

It catalyses the reaction (6R)-10-formyltetrahydrofolate + 5-amino-1-(5-phospho-beta-D-ribosyl)imidazole-4-carboxamide = 5-formamido-1-(5-phospho-D-ribosyl)imidazole-4-carboxamide + (6S)-5,6,7,8-tetrahydrofolate. The catalysed reaction is IMP + H2O = 5-formamido-1-(5-phospho-D-ribosyl)imidazole-4-carboxamide. The protein operates within purine metabolism; IMP biosynthesis via de novo pathway; 5-formamido-1-(5-phospho-D-ribosyl)imidazole-4-carboxamide from 5-amino-1-(5-phospho-D-ribosyl)imidazole-4-carboxamide (10-formyl THF route): step 1/1. Its pathway is purine metabolism; IMP biosynthesis via de novo pathway; IMP from 5-formamido-1-(5-phospho-D-ribosyl)imidazole-4-carboxamide: step 1/1. The polypeptide is Bifunctional purine biosynthesis protein PurH (Clostridium perfringens (strain ATCC 13124 / DSM 756 / JCM 1290 / NCIMB 6125 / NCTC 8237 / Type A)).